The primary structure comprises 148 residues: uncharacterized protein (148 aa).

The span at 37–94 (NNNNYNNNNKNNNNNNNNNNNNNNNNNNNNNNNYINSCNSNNNNNNNNNNTKNNNINS) shows a compositional bias: low complexity. The tract at residues 37–99 (NNNNYNNNNK…NNINSRTDKN (63 aa)) is disordered.

This is an uncharacterized protein from Dictyostelium discoideum (Social amoeba).